We begin with the raw amino-acid sequence, 462 residues long: NEDD8-activating enzyme E1 catalytic subunit (462 aa).

The residue at position 2 (alanine 2) is an N-acetylalanine. The tract at residues 53–70 is interaction with UBE2M N-terminus; the sequence is HPDFEPSTESLQFLLDTC. ATP is bound by residues 100-124 and 148-171; these read DMDT…GRPK and IQDF…SIIA. 2 interaction with UBE2M N-terminus regions span residues 157–161 and 192–217; these read RQFHI and PSSI…LPGM. The segment at 227 to 229 is interaction with NEDD8; that stretch reads LYP. The active-site Glycyl thioester intermediate is cysteine 237. Interaction with NAE1 stretches follow at residues 242 to 248 and 292 to 295; these read MPRLPEH and YNIR. The segment at 331–338 is interaction with UBE2M N-terminus; sequence IATSAYIP. Residues 352 to 357 form an interaction with NEDD8 region; that stretch reads YTYTFE. An interaction with UBE2M core domain region spans residues 368–462; sequence SQLPQNIQFS…QTVLFKLHFT (95 aa).

It belongs to the ubiquitin-activating E1 family. UBA3 subfamily. Heterodimer of UBA3 and NAE1. Interacts with NEDD8, UBE2F and UBE2M. Binds ESR1 and ESR2 with bound steroid ligand. Interacts with TBATA.

The catalysed reaction is ATP + [NEDD8 protein] + [E1 NEDD8-activating enzyme]-L-cysteine = AMP + diphosphate + [E1 NEDD8-activating enzyme]-S-[NEDD8 protein]-yl-L-cysteine.. Its pathway is protein modification; protein neddylation. With respect to regulation, binding of TP53BP2 to the regulatory subunit NAE1 decreases activity. Its function is as follows. Catalytic subunit of the dimeric UBA3-NAE1 E1 enzyme. E1 activates NEDD8 by first adenylating its C-terminal glycine residue with ATP, thereafter linking this residue to the side chain of the catalytic cysteine, yielding a NEDD8-UBA3 thioester and free AMP. E1 finally transfers NEDD8 to the catalytic cysteine of UBE2M. Down-regulates steroid receptor activity. Necessary for cell cycle progression. This Mus musculus (Mouse) protein is NEDD8-activating enzyme E1 catalytic subunit (Uba3).